A 120-amino-acid polypeptide reads, in one-letter code: Large ribosomal subunit protein uL18 (120 aa).

Positions 1–29 (MITKPNKNAGRKKRHAHVRRTLSGTPQRP) are disordered. Positions 9–20 (AGRKKRHAHVRR) are enriched in basic residues.

Belongs to the universal ribosomal protein uL18 family. Part of the 50S ribosomal subunit; part of the 5S rRNA/L5/L18/L25 subcomplex. Contacts the 5S and 23S rRNAs.

In terms of biological role, this is one of the proteins that bind and probably mediate the attachment of the 5S RNA into the large ribosomal subunit, where it forms part of the central protuberance. The chain is Large ribosomal subunit protein uL18 from Shouchella clausii (strain KSM-K16) (Alkalihalobacillus clausii).